The primary structure comprises 70 residues: DNA gyrase inhibitor YacG (70 aa).

4 residues coordinate Zn(2+): Cys9, Cys12, Cys28, and Cys32. The segment at 43–70 (ESRKIPGSSIDPESIVTSNNKQDNVDEQ) is disordered.

The protein belongs to the DNA gyrase inhibitor YacG family. As to quaternary structure, interacts with GyrB. The cofactor is Zn(2+).

In terms of biological role, inhibits all the catalytic activities of DNA gyrase by preventing its interaction with DNA. Acts by binding directly to the C-terminal domain of GyrB, which probably disrupts DNA binding by the gyrase. The chain is DNA gyrase inhibitor YacG from Legionella pneumophila (strain Lens).